The following is a 581-amino-acid chain: Arginine--tRNA ligase (581 aa).

A 'HIGH' region motif is present at residues 126–136 (PNLAKEMHVGH).

Belongs to the class-I aminoacyl-tRNA synthetase family. As to quaternary structure, monomer.

It localises to the cytoplasm. The catalysed reaction is tRNA(Arg) + L-arginine + ATP = L-arginyl-tRNA(Arg) + AMP + diphosphate. This Shewanella sp. (strain ANA-3) protein is Arginine--tRNA ligase.